Reading from the N-terminus, the 423-residue chain is Guanine nucleotide-binding protein subunit beta (423 aa).

WD repeat units follow at residues 90 to 120 (GHNN…LIWD), 132 to 162 (LDSQ…TIYR), 179 to 208 (GHTC…ALWD), 220 to 256 (DHLG…YIWD), 268 to 298 (VNDS…NMYD), 348 to 377 (DNQG…VVWD), and 389 to 419 (GHGG…KIWS).

It belongs to the WD repeat G protein beta family. G proteins are composed of 3 units, alpha, beta and gamma. The beta-gamma subunit complex (STE4-STE18 complex) interacts with PLP1 and PLP2. Interacts with SYG1.

In terms of biological role, implicated in the a- and alpha-factor response pathway. The beta and gamma chains of the putative yeast mating response pathway G protein play a positive role in initiation of the mating response. The beta and gamma chains are required for the GTPase activity, for replacement of GDP by GTP, and for G protein-effector interaction. This Saccharomyces cerevisiae (strain ATCC 204508 / S288c) (Baker's yeast) protein is Guanine nucleotide-binding protein subunit beta (STE4).